Consider the following 339-residue polypeptide: Heat-inducible transcription repressor HrcA (339 aa).

Belongs to the HrcA family.

Negative regulator of class I heat shock genes (grpE-dnaK-dnaJ and groELS operons). Prevents heat-shock induction of these operons. This Frankia casuarinae (strain DSM 45818 / CECT 9043 / HFP020203 / CcI3) protein is Heat-inducible transcription repressor HrcA.